An 84-amino-acid polypeptide reads, in one-letter code: Alpha-mammal toxin Aah3 (84 aa).

Positions 1–19 (MNYLVMISLALLLMTGVES) are cleaved as a signal peptide. An LCN-type CS-alpha/beta domain is found at 21 to 82 (RDGYIVDSKN…PIKDPSYKCH (62 aa)). 4 disulfide bridges follow: C31–C81, C35–C53, C39–C63, and C43–C65. A propeptide (removed by a carboxypeptidase) is located at residue R84.

This sequence belongs to the long (4 C-C) scorpion toxin superfamily. Sodium channel inhibitor family. Alpha subfamily. In terms of tissue distribution, expressed by the venom gland.

It localises to the secreted. In terms of biological role, alpha toxins bind voltage-independently at site-3 of sodium channels (Nav) and inhibit the inactivation of the activated channels, thereby blocking neuronal transmission. In Androctonus australis (Sahara scorpion), this protein is Alpha-mammal toxin Aah3.